The chain runs to 484 residues: Phosphoenolpyruvate carboxylase (484 aa).

It belongs to the PEPCase type 2 family. In terms of assembly, homotetramer. Mg(2+) serves as cofactor.

It carries out the reaction oxaloacetate + phosphate = phosphoenolpyruvate + hydrogencarbonate. In terms of biological role, catalyzes the irreversible beta-carboxylation of phosphoenolpyruvate (PEP) to form oxaloacetate (OAA), a four-carbon dicarboxylic acid source for the tricarboxylic acid cycle. The sequence is that of Phosphoenolpyruvate carboxylase from Methanospirillum hungatei JF-1 (strain ATCC 27890 / DSM 864 / NBRC 100397 / JF-1).